A 143-amino-acid polypeptide reads, in one-letter code: MGRHYEIVLLVHPDQSEQVQAMLERYKALIENGHGKIHRLEDWGRRQLAYPIQKLVKAHYLMMNIEVEQSVLNELVDLFRFNDAILRHLAIKRSGPDTEQSFIMKSKDDKGDKPERRRRDDDENGDVGVSNDSDNDGGNAEAA.

The tract at residues 95 to 143 (GPDTEQSFIMKSKDDKGDKPERRRRDDDENGDVGVSNDSDNDGGNAEAA) is disordered. Residues 105–121 (KSKDDKGDKPERRRRDD) show a composition bias toward basic and acidic residues.

Belongs to the bacterial ribosomal protein bS6 family.

Its function is as follows. Binds together with bS18 to 16S ribosomal RNA. This is Small ribosomal subunit protein bS6 from Xylella fastidiosa (strain M23).